A 670-amino-acid chain; its full sequence is Meiotic sister-chromatid recombination protein 6, mitochondrial (670 aa).

Residues 1–27 (MLFSRASKIRVSQLMRRLQSTAVGRAA) constitute a mitochondrion transit peptide.

The protein localises to the mitochondrion. Functionally, may be involved in the control of meiotic sister-chromatid recombination. This chain is Meiotic sister-chromatid recombination protein 6, mitochondrial (MSC6), found in Eremothecium gossypii (strain ATCC 10895 / CBS 109.51 / FGSC 9923 / NRRL Y-1056) (Yeast).